The following is a 105-amino-acid chain: uncharacterized protein (105 aa).

Residues 1-27 (MSLKSWHPQSKTKRVGASEGNPQWGSG) are disordered.

This is an uncharacterized protein from Homo sapiens (Human).